The following is a 146-amino-acid chain: Putative pre-16S rRNA nuclease (146 aa).

The protein belongs to the YqgF nuclease family.

It is found in the cytoplasm. In terms of biological role, could be a nuclease involved in processing of the 5'-end of pre-16S rRNA. The polypeptide is Putative pre-16S rRNA nuclease (Mycoplasmopsis pulmonis (strain UAB CTIP) (Mycoplasma pulmonis)).